A 407-amino-acid polypeptide reads, in one-letter code: Complement decay-accelerating factor transmembrane isoform (407 aa).

Residues 1-39 (MVSSTWGYDPRAGAGDLVITTTAAGAVTIAVLLFQTVCG) form the signal peptide. Sushi domains follow at residues 40-101 (DCGP…FCEK), 102-165 (SCDT…FCKK), 166-227 (KSCP…VCTE), and 228-291 (IFCP…QCIE). At 40–368 (DCGPPPDIPN…NSGGDRYIYG (329 aa)) the chain is on the extracellular side. 8 disulfides stabilise this stretch: Cys-41–Cys-86, Cys-70–Cys-99, Cys-103–Cys-150, Cys-134–Cys-163, Cys-168–Cys-209, Cys-195–Cys-225, Cys-230–Cys-272, and Cys-258–Cys-289. Asn-192 carries an N-linked (GlcNAc...) asparagine glycan. A glycan (N-linked (GlcNAc...) asparagine) is linked at Asn-267. A disordered region spans residues 301-361 (VVNVPSTGIP…STDKGESNSG (61 aa)). The segment covering 306-324 (STGIPSTPQKPTTESVPNP) has biased composition (polar residues). Residues 343–357 (HEPDTTTRTSTDKGE) are compositionally biased toward basic and acidic residues. Residues 369-389 (FVAVIAMIDSLIIVKTLWTIL) traverse the membrane as a helical segment. At 390 to 407 (SPNRRSDFQGKERKDVSK) the chain is on the cytoplasmic side.

It belongs to the receptors of complement activation (RCA) family. As to expression, testis, spleen and lymph node.

The protein resides in the membrane. This protein recognizes C4b and C3b fragments that condense with cell-surface hydroxyl or amino groups when nascent C4b and C3b are locally generated during C4 and c3 activation. Interaction of daf with cell-associated C4b and C3b polypeptides interferes with their ability to catalyze the conversion of C2 and factor B to enzymatically active C2a and Bb and thereby prevents the formation of C4b2a and C3bBb, the amplification convertases of the complement cascade. Inhibits complement activation by destabilizing and preventing the formation of C3 and C5 convertases, which prevents complement damage. This chain is Complement decay-accelerating factor transmembrane isoform (Cd55b), found in Mus musculus (Mouse).